Here is an 871-residue protein sequence, read N- to C-terminus: MSAPLEHHTPMMAQYLALKGGYPETLLFYRMGDFYELFYADAEKAARLLNITLTQRGQSGGQTVVMAGVPFHALENYLTRLIKLGESVAIAEQVGEVGAAKGPLERKVVRVITPGTLTDTELLSDKAESLLLSLHQAARARCGLAWLSVTQGRVHLAECAHDELGAWLARVAPSEIIYSAGVTQRFEQQLQALRQSGAFDCPMRTRPDWQFDQALGERKLLEHLGAASLQAWDAQDLGAAQAAAAGLLAYAEHTQGRALTHVHSVQAQRGDELIDLPGSTRRNLELVKTLRGDDAPTLLSLLDNCMTGMGSRLLKTWLLEPHRERHQARQRLSASTALRGAAAGAGPWATLREQIKGASDVERITARIALRQVRPRELPGLVKTLQKAQLLAQHGQIPEPYLMQIFDQLHPPEGCAELLQAAIAEEPAALVREGGVIATGFDAELDELRALQTDCDGFLLDLETREKARTGIANLRVQFNKVHGFYIEVTSSNLERVPADYRRRQTLKNAERFITPELKAFEDKALSANERALVREKWLYEQILDRLQPHVPALTRLAQALATLDVLCTLAERSLTLNWCAPQFVSEPCIEIEGGRHPVVEARLAETASGSFIANHTRLNANTRMQLITGPNMGGKSTYMRQVALIVLLASIGSHVPASSCRLGPIDAIHTRIGAADDLANAQSTFMLEMTEAAHILHAATAHSLVLMDEIGRGTSTFDGLALASGIATHLHDKTRAFTLFATHYFELTDLPAKARHAINMHVSATESGADIVFLHEIQPGPASRSYGIQVAKLAGMPPPVLHHARRTLAALEERAGAGQLQVDLFAAPKEEPESKSASPVEAALAGINPDALSPREALDALYQLKRMAGK.

Gly630–Ser637 is an ATP binding site. The disordered stretch occupies residues Lys830–Asn849.

It belongs to the DNA mismatch repair MutS family.

In terms of biological role, this protein is involved in the repair of mismatches in DNA. It is possible that it carries out the mismatch recognition step. This protein has a weak ATPase activity. The sequence is that of DNA mismatch repair protein MutS from Verminephrobacter eiseniae (strain EF01-2).